A 361-amino-acid chain; its full sequence is Mannose-1-phosphate guanyltransferase (361 aa).

The protein belongs to the transferase hexapeptide repeat family.

It is found in the cytoplasm. It carries out the reaction alpha-D-mannose 1-phosphate + GTP + H(+) = GDP-alpha-D-mannose + diphosphate. It functions in the pathway nucleotide-sugar biosynthesis; GDP-alpha-D-mannose biosynthesis; GDP-alpha-D-mannose from alpha-D-mannose 1-phosphate (GTP route): step 1/1. Functionally, involved in cell wall synthesis where it is required for glycosylation. Involved in cell cycle progression through cell-size checkpoint. The chain is Mannose-1-phosphate guanyltransferase (MPG1) from Kluyveromyces lactis (strain ATCC 8585 / CBS 2359 / DSM 70799 / NBRC 1267 / NRRL Y-1140 / WM37) (Yeast).